Consider the following 758-residue polypeptide: Zinc finger protein VAR3, chloroplastic (758 aa).

The 3 X approximate repeat stretch occupies residues 122–502 (FPGFPDELLR…PKEETQIGLI (381 aa)). RanBP2-type zinc fingers lie at residues 276 to 305 (KRGD…ARPK) and 308 to 338 (LTGS…KRPR). Copy 1 of the repeat occupies 368–415 (RWLSKVAQGGSDANSVDTDEDFPEIMPLRKGVNRYVVSTRKPPLERRL). Disordered regions lie at residues 410 to 470 (PLER…RFES), 512 to 545 (GGNQ…SEEP), 572 to 606 (EKMP…DSDF), 629 to 654 (TLPA…INKS), and 727 to 758 (KRKT…KGDK). Composition is skewed to basic and acidic residues over residues 457-469 (RSDD…RRFE), 519-545 (QEDK…SEEP), and 572-581 (EKMPMRKGEN). Copy 2 of the repeat occupies 547-596 (RWFKRVTELHNVSDLESAIPQEISPEKMPMRKGENRFVVSRKKDRSLTSP). The stretch at 688–736 (RWFKRVAEIKNISELSEIPDEDFPSIMPMRKGVNRFVVSKRKTPLERRL) is repeat 3.

As to quaternary structure, interacts in vitro with the chloroplast-located protein CCD4/NCED4. Homodimer. Interacts with ORRM1. Interacts with PCMP-H51/CRR28 and PCMP-H12/OTP82. Interacts with ORRM6. As to expression, weakly expressed in leaves and roots.

Its subcellular location is the plastid. It is found in the chloroplast. In terms of biological role, probable component of some protein complex required for chloroplast and palisade cell development. Involved in C-to-U editing of chloroplastic RNA. Controls a large number of chloroplastic editing sites. Binds the editing recognition trans-factors PCMP-H51/CRR28 and PCMP-H12/OTP82. The polypeptide is Zinc finger protein VAR3, chloroplastic (Arabidopsis thaliana (Mouse-ear cress)).